The primary structure comprises 358 residues: Very long chain fatty acid elongase AAEL008004 (358 aa).

The next 7 membrane-spanning stretches (helical) occupy residues 26 to 46, 66 to 86, 115 to 135, 147 to 167, 171 to 191, 207 to 227, and 234 to 254; these read WPLM…VYLV, LILY…EIGI, ACWW…FFVM, VIHH…TPGG, FFGL…LFTA, TSLQ…LLFI, and AFVW…NEFY. Residues 285-295 are compositionally biased toward polar residues; the sequence is SAVSSNGSAIT. The segment at 285–322 is disordered; the sequence is SAVSSNGSAITANGHHGKNGSVHHHSNGSATSNGTSLL. A compositionally biased stretch (basic residues) spans 299-310; the sequence is HHGKNGSVHHHS. Positions 311–322 are enriched in polar residues; the sequence is NGSATSNGTSLL.

This sequence belongs to the ELO family.

It localises to the membrane. The enzyme catalyses a very-long-chain acyl-CoA + malonyl-CoA + H(+) = a very-long-chain 3-oxoacyl-CoA + CO2 + CoA. Could be implicated in synthesis of very long chain fatty acids. The sequence is that of Very long chain fatty acid elongase AAEL008004 from Aedes aegypti (Yellowfever mosquito).